The following is a 358-amino-acid chain: Replication factor C subunit 5 (358 aa).

Belongs to the activator 1 small subunits family. As to quaternary structure, heteropentamer of subunits rfc1, rfc2, rfc3, rfc4 and rfc5 that forms a complex (RFC) with PCNA in the presence of ATP. Two other complexes exist where rfc1 can be replaced by either ctf18 or elg1 to form the ctf18-RFC or the elg1-RFC complexes respectively.

The protein localises to the nucleus. Its function is as follows. The elongation of primed DNA templates by DNA polymerase delta and epsilon requires the action of the accessory proteins PCNA and activator 1. This is Replication factor C subunit 5 (rfc5) from Schizosaccharomyces pombe (strain 972 / ATCC 24843) (Fission yeast).